Reading from the N-terminus, the 181-residue chain is Shikimate kinase (181 aa).

17 to 22 (GVGKTT) is an ATP binding site. Mg(2+) is bound at residue Thr21. Positions 39, 63, and 85 each coordinate substrate. Arg122 serves as a coordination point for ATP. Arg141 is a substrate binding site.

Belongs to the shikimate kinase family. As to quaternary structure, monomer. Requires Mg(2+) as cofactor.

The protein resides in the cytoplasm. It catalyses the reaction shikimate + ATP = 3-phosphoshikimate + ADP + H(+). The protein operates within metabolic intermediate biosynthesis; chorismate biosynthesis; chorismate from D-erythrose 4-phosphate and phosphoenolpyruvate: step 5/7. In terms of biological role, catalyzes the specific phosphorylation of the 3-hydroxyl group of shikimic acid using ATP as a cosubstrate. This chain is Shikimate kinase, found in Nostoc punctiforme (strain ATCC 29133 / PCC 73102).